The primary structure comprises 181 residues: Biofilm-surface layer protein A (181 aa).

An N-terminal signal peptide occupies residues 1–28; it reads MKRKLLSSLAISALSLGLLVSAPTASFA.

Belongs to the BslA/BslB family. In terms of assembly, forms polymers.

The protein resides in the secreted. It localises to the cell wall. Its function is as follows. Involved in biofilm formation. Self-polymerizes and forms a layer on the surface of biofilms that confers hydrophobicity to the biofilm. The layer is stable and capable of resistance to high mechanical force compression. Required for complex colony architecture. May function synergistically with exopolysaccharides and TasA amyloid fibers to facilitate the assembly of the biofilm matrix. The polypeptide is Biofilm-surface layer protein A (Bacillus subtilis (strain 168)).